The chain runs to 134 residues: uncharacterized protein (134 aa).

Residues 13 to 35 traverse the membrane as a helical segment; it reads FFIAFSAYLVVILLMTAVSVYYL.

It localises to the membrane. This is an uncharacterized protein from Archaeoglobus fulgidus (strain ATCC 49558 / DSM 4304 / JCM 9628 / NBRC 100126 / VC-16).